We begin with the raw amino-acid sequence, 445 residues long: Arginine/agmatine antiporter (445 aa).

Topologically, residues 1 to 9 (MSSDADAHK) are cytoplasmic. The helical transmembrane segment at 10–30 (VGLIPVTLMVSGNIMGSGVFL) threads the bilayer. Residue I23 coordinates agmatine. 2 residues coordinate L-arginine: I23 and S26. Topologically, residues 31–38 (LPANLAAT) are periplasmic. A helical transmembrane segment spans residues 39–59 (GGIAIYGWLVTIIGALALSMV). Over 60–98 (YAKMSSLDPSPGGSYAYARRCFGPFLGYQTNVLYWLACW) the chain is Cytoplasmic. Agmatine-binding residues include A96, C97, and N101. L-arginine is bound at residue A96. A helical membrane pass occupies residues 99–119 (IGNIAMVVIGVGYLSYFFPIL). Residues 120–122 (KDP) lie on the Periplasmic side of the membrane. Residues 123 to 143 (LVLTLTCVAVLWIFVLLNIVG) form a helical membrane-spanning segment. Residues 144-152 (PKMITRVQA) are Cytoplasmic-facing. Residues 153–173 (VATVLALVPIVGIAVFGWFWF) traverse the membrane as a helical segment. The Periplasmic segment spans residues 174–196 (KGETYMAAWNVSGMNTFGAIQST). The helical transmembrane segment at 197-217 (LNVTLWSFIGVESASVAAGVV) threads the bilayer. Positions 202 and 205 each coordinate L-arginine. An agmatine-binding site is contributed by I205. Residues 218-225 (KNPKRNVP) are Cytoplasmic-facing. A helical membrane pass occupies residues 226-246 (IATIGGVLIAAVCYVLSTTAI). Residues 247–275 (MGMIPNAALRVSASPFGDAARMALGDTAG) are Periplasmic-facing. Residues 276 to 296 (AIVSFCAAAGCLGSLGGWTLL) form a helical membrane-spanning segment. W293 is a binding site for agmatine. At 297 to 319 (AGQTAKAAADDGLFPPIFARVNK) the chain is on the cytoplasmic side. The chain crosses the membrane as a helical span at residues 320-340 (AGTPVAGLLIVGVLMTIFQFS). The Periplasmic portion of the chain corresponds to 341–355 (SMSPNAAKEFGLVSS). Residues 356-376 (VSVIFTLVPYLYTCAALLLLG) traverse the membrane as a helical segment. Position 357 (S357) interacts with L-arginine. At 377–385 (HGHFGKARP) the chain is on the cytoplasmic side. A helical transmembrane segment spans residues 386-406 (LYLLITFVAFVYCIWAVIGSG). Topologically, residues 407-408 (AK) are periplasmic. The helical transmembrane segment at 409–429 (EVMWSFVTLMVITALYALNYN) threads the bilayer. The Cytoplasmic portion of the chain corresponds to 430–445 (RIHKNPYPLDAPVKQD).

Belongs to the amino acid-polyamine-organocation (APC) superfamily. Basic amino acid/polyamine antiporter (APA) (TC 2.A.3.2) family. As to quaternary structure, homodimer; each subunit has its own individual transport capacity.

It localises to the cell inner membrane. It carries out the reaction agmatine(in) + L-arginine(out) = agmatine(out) + L-arginine(in). In terms of biological role, major component of the acid-resistance (AR) system allowing enteric pathogens to survive the acidic environment in the stomach. Exchanges extracellular arginine for its intracellular decarboxylation product agmatine (Agm) thereby expelling intracellular protons. Probably undergoes several conformational states in order to translocate the substrate across the membrane; keeps the substrate accessible to only 1 side of the membrane at a time by opening and closing 3 membrane-internal gates. The chain is Arginine/agmatine antiporter (adiC) from Salmonella typhi.